Here is a 213-residue protein sequence, read N- to C-terminus: Large ribosomal subunit protein uL4 (213 aa).

A disordered region spans residues 51 to 90 (TASTLTKAEVRGGGRKPYKQKHTGRARQGSIRNPHYVGGG). Basic residues predominate over residues 63–75 (GGRKPYKQKHTGR).

The protein belongs to the universal ribosomal protein uL4 family. Part of the 50S ribosomal subunit.

Functionally, one of the primary rRNA binding proteins, this protein initially binds near the 5'-end of the 23S rRNA. It is important during the early stages of 50S assembly. It makes multiple contacts with different domains of the 23S rRNA in the assembled 50S subunit and ribosome. Its function is as follows. Forms part of the polypeptide exit tunnel. The protein is Large ribosomal subunit protein uL4 of Malacoplasma penetrans (strain HF-2) (Mycoplasma penetrans).